We begin with the raw amino-acid sequence, 188 residues long: Cytochrome b-245 chaperone 1 homolog (188 aa).

Residues 20–42 (SIRSWSLLVGISSVGLAAAYYST) form a helical membrane-spanning segment.

Belongs to the CYBC1 family.

It is found in the endoplasmic reticulum membrane. Functionally, functions as a chaperone necessary for a stable expression of the CYBA and CYBB subunits of the cytochrome b-245 heterodimer. This is Cytochrome b-245 chaperone 1 homolog (cybc1) from Xenopus tropicalis (Western clawed frog).